A 405-amino-acid chain; its full sequence is Deoxyguanosinetriphosphate triphosphohydrolase-like protein (405 aa).

In terms of domain architecture, HD spans 75–219 (RLTHTIEVAQ…AAIADDIAYN (145 aa)).

It belongs to the dGTPase family. Type 2 subfamily.

The chain is Deoxyguanosinetriphosphate triphosphohydrolase-like protein from Rhizobium meliloti (strain 1021) (Ensifer meliloti).